A 255-amino-acid polypeptide reads, in one-letter code: ATP synthase subunit a (255 aa).

The propeptide at 1 to 7 (MMFNNII) is removed in mature form. The next 6 helical transmembrane spans lie at 35–55 (FGFYIIISTIIILTLHLLITY), 91–111 (YFPFIYGLFIFILMNNLLGLI), 120–140 (HFILTFFISFTVVLGATILGF), 147–167 (FFSLFVPSGCPLGLLPLLVLI), 177–197 (VSLGLRLSANILSGHMLLVIL), and 208–228 (GIFYFLIGLIPLAFIFAFSGL).

It belongs to the ATPase A chain family. As to quaternary structure, F-type ATPases have 2 components, CF(1) - the catalytic core - and CF(0) - the membrane proton channel. CF(1) has five subunits: alpha(3), beta(3), gamma(1), delta(1), epsilon(1). CF(0) has three main subunits: a, b and c.

The protein resides in the mitochondrion inner membrane. Its function is as follows. Mitochondrial membrane ATP synthase (F(1)F(0) ATP synthase or Complex V) produces ATP from ADP in the presence of a proton gradient across the membrane which is generated by electron transport complexes of the respiratory chain. F-type ATPases consist of two structural domains, F(1) - containing the extramembraneous catalytic core and F(0) - containing the membrane proton channel, linked together by a central stalk and a peripheral stalk. During catalysis, ATP synthesis in the catalytic domain of F(1) is coupled via a rotary mechanism of the central stalk subunits to proton translocation. Key component of the proton channel; it may play a direct role in the translocation of protons across the membrane. In Trichophyton rubrum (Athlete's foot fungus), this protein is ATP synthase subunit a (ATP6).